We begin with the raw amino-acid sequence, 645 residues long: Threonine--tRNA ligase (645 aa).

Residues 1-63 (MEQINIQFPD…ETDGSIGIVT (63 aa)) enclose the TGS domain. Residues 242–540 (DHRKIGKELE…LTEETKGAFP (299 aa)) form a catalytic region. 3 residues coordinate Zn(2+): C336, H387, and H517.

Belongs to the class-II aminoacyl-tRNA synthetase family. Homodimer. The cofactor is Zn(2+).

The protein resides in the cytoplasm. The catalysed reaction is tRNA(Thr) + L-threonine + ATP = L-threonyl-tRNA(Thr) + AMP + diphosphate + H(+). Functionally, catalyzes the attachment of threonine to tRNA(Thr) in a two-step reaction: L-threonine is first activated by ATP to form Thr-AMP and then transferred to the acceptor end of tRNA(Thr). Also edits incorrectly charged L-seryl-tRNA(Thr). This chain is Threonine--tRNA ligase, found in Staphylococcus aureus (strain Mu3 / ATCC 700698).